A 76-amino-acid chain; its full sequence is Esculentin-2MT2 (76 aa).

Positions 1-22 (MFTLKKSMLLLFFLGTISLSLC) are cleaved as a signal peptide. A propeptide spans 23 to 37 (EEERSADEDDGEKEV) (removed in mature form). The cysteines at positions 70 and 76 are disulfide-linked.

It belongs to the frog skin active peptide (FSAP) family. Esculentin subfamily. As to expression, expressed by the skin glands.

The protein localises to the secreted. Its function is as follows. Antimicrobial peptide. Active against a variety of Gram-negative and Gram-positive bacterial strains. Active against fungi. Shows strong hemolytic activity against human erythrocytes. The protein is Esculentin-2MT2 of Amolops mantzorum (Sichuan torrent frog).